The sequence spans 292 residues: ATP synthase gamma chain (292 aa).

It belongs to the ATPase gamma chain family. In terms of assembly, F-type ATPases have 2 components, CF(1) - the catalytic core - and CF(0) - the membrane proton channel. CF(1) has five subunits: alpha(3), beta(3), gamma(1), delta(1), epsilon(1). CF(0) has three main subunits: a, b and c.

It localises to the cell membrane. Produces ATP from ADP in the presence of a proton gradient across the membrane. The gamma chain is believed to be important in regulating ATPase activity and the flow of protons through the CF(0) complex. The protein is ATP synthase gamma chain of Streptococcus mutans serotype c (strain ATCC 700610 / UA159).